We begin with the raw amino-acid sequence, 112 residues long: Large ribosomal subunit protein bL17 (112 aa).

Belongs to the bacterial ribosomal protein bL17 family. As to quaternary structure, part of the 50S ribosomal subunit. Contacts protein L32.

The polypeptide is Large ribosomal subunit protein bL17 (Thermoanaerobacter pseudethanolicus (strain ATCC 33223 / 39E) (Clostridium thermohydrosulfuricum)).